The primary structure comprises 191 residues: Holliday junction branch migration complex subunit RuvA (191 aa).

The tract at residues 1-64 is domain I; that stretch reads MIGSITGNVE…DNITQLYGFL (64 aa). Residues 65–142 are domain II; it reads NRQEQDYLKM…KMPIEETFSI (78 aa). The segment at 143-146 is flexible linker; that stretch reads IEND. Positions 146-191 are domain III; the sequence is DDSLAALISLGYEKLKAFNVIQEIKSKTPDASTQEVIRKALQKLSQ.

The protein belongs to the RuvA family. In terms of assembly, homotetramer. Forms an RuvA(8)-RuvB(12)-Holliday junction (HJ) complex. HJ DNA is sandwiched between 2 RuvA tetramers; dsDNA enters through RuvA and exits via RuvB. An RuvB hexamer assembles on each DNA strand where it exits the tetramer. Each RuvB hexamer is contacted by two RuvA subunits (via domain III) on 2 adjacent RuvB subunits; this complex drives branch migration. In the full resolvosome a probable DNA-RuvA(4)-RuvB(12)-RuvC(2) complex forms which resolves the HJ.

It is found in the cytoplasm. Its function is as follows. The RuvA-RuvB-RuvC complex processes Holliday junction (HJ) DNA during genetic recombination and DNA repair, while the RuvA-RuvB complex plays an important role in the rescue of blocked DNA replication forks via replication fork reversal (RFR). RuvA specifically binds to HJ cruciform DNA, conferring on it an open structure. The RuvB hexamer acts as an ATP-dependent pump, pulling dsDNA into and through the RuvAB complex. HJ branch migration allows RuvC to scan DNA until it finds its consensus sequence, where it cleaves and resolves the cruciform DNA. This chain is Holliday junction branch migration complex subunit RuvA, found in Ehrlichia ruminantium (strain Welgevonden).